Consider the following 377-residue polypeptide: cAMP-dependent protein kinase type II regulatory subunit (377 aa).

Residues 48–69 (ERPSVSHTDQSTDDQLSVNSQD) show a composition bias toward polar residues. The tract at residues 48–78 (ERPSVSHTDQSTDDQLSVNSQDADAEPPVMA) is disordered. S51, S58, S64, S67, and S84 each carry phosphoserine. The short motif at 81 to 85 (RRKSV) is the Pseudophosphorylation motif element. Position 90 is a phosphotyrosine (Y90). 3',5'-cyclic AMP is bound by residues 124–239 (LFRS…LLNS), E189, R198, 242–362 (MLKA…YESQ), E311, and R320.

The protein belongs to the cAMP-dependent kinase regulatory chain family. As to quaternary structure, tetramer, composed of 2 regulatory (R) and 2 catalytic (C) subunits. In the presence of cAMP it dissociates into 2 active monomeric C subunits and an R dimer. Interacts with Akap200. In terms of processing, the pseudophosphorylation site binds to the substrate-binding region of the catalytic chain but is not phosphorylated. The physiological significance of phosphorylations by other kinases is unclear. As to expression, detected in follicle cells, germline-derived cells, germline line stem cells and outer rim of ring canals of nurse cells throughout oogenesis (at protein level).

The protein resides in the cytoplasm. The protein localises to the cell membrane. In terms of biological role, regulatory subunit of the cAMP-dependent protein kinases involved in cAMP signaling in cells. Mediates membrane association by binding to anchoring proteins, such as Akap200. Might play an essential role in the regulation of neuronal activity in the brain. The sequence is that of cAMP-dependent protein kinase type II regulatory subunit (Pka-R2) from Drosophila melanogaster (Fruit fly).